Here is a 72-residue protein sequence, read N- to C-terminus: Translation initiation factor IF-1 (72 aa).

Residues 1 to 72 (MAKQSAIEQD…SKGRIVFRYK (72 aa)) form the S1-like domain.

It belongs to the IF-1 family. In terms of assembly, component of the 30S ribosomal translation pre-initiation complex which assembles on the 30S ribosome in the order IF-2 and IF-3, IF-1 and N-formylmethionyl-tRNA(fMet); mRNA recruitment can occur at any time during PIC assembly.

The protein localises to the cytoplasm. In terms of biological role, one of the essential components for the initiation of protein synthesis. Stabilizes the binding of IF-2 and IF-3 on the 30S subunit to which N-formylmethionyl-tRNA(fMet) subsequently binds. Helps modulate mRNA selection, yielding the 30S pre-initiation complex (PIC). Upon addition of the 50S ribosomal subunit IF-1, IF-2 and IF-3 are released leaving the mature 70S translation initiation complex. This Bacteroides fragilis (strain ATCC 25285 / DSM 2151 / CCUG 4856 / JCM 11019 / LMG 10263 / NCTC 9343 / Onslow / VPI 2553 / EN-2) protein is Translation initiation factor IF-1.